Consider the following 120-residue polypeptide: UPF0231 protein YacL (120 aa).

Belongs to the UPF0231 family.

This chain is UPF0231 protein YacL, found in Salmonella typhi.